The sequence spans 495 residues: Glucose-6-phosphate 1-dehydrogenase (495 aa).

An Isoglutamyl lysine isopeptide (Lys-Gln) (interchain with Q-Cter in protein Pup) cross-link involves residue K51. NADP(+)-binding positions include D94–L95 and K154. Substrate contacts are provided by H184, K188, E222, and D241. The active-site Proton acceptor is the H246. K345 lines the substrate pocket.

This sequence belongs to the glucose-6-phosphate dehydrogenase family.

The enzyme catalyses D-glucose 6-phosphate + NADP(+) = 6-phospho-D-glucono-1,5-lactone + NADPH + H(+). It functions in the pathway carbohydrate degradation; pentose phosphate pathway; D-ribulose 5-phosphate from D-glucose 6-phosphate (oxidative stage): step 1/3. Catalyzes the oxidation of glucose 6-phosphate to 6-phosphogluconolactone. This Mycolicibacterium smegmatis (strain ATCC 700084 / mc(2)155) (Mycobacterium smegmatis) protein is Glucose-6-phosphate 1-dehydrogenase.